A 255-amino-acid polypeptide reads, in one-letter code: Gene 54 protein (255 aa).

This chain is Gene 54 protein (54), found in Mycobacterium (Mycobacteriophage L5).